We begin with the raw amino-acid sequence, 933 residues long: Bifunctional uridylyltransferase/uridylyl-removing enzyme (933 aa).

Residues 1–379 (MAKISLKLDE…TFQRRKRKLA (379 aa)) are uridylyltransferase. The tract at residues 380-736 (GTSDFIVDNH…VKTHQFEAVT (357 aa)) is uridylyl-removing. The HD domain occupies 496–619 (VDEHLIRCIG…VQSVERLKLL (124 aa)). ACT domains follow at residues 737-818 (EITV…EMIE) and 848-922 (VIEV…GIAP).

Belongs to the GlnD family. It depends on Mg(2+) as a cofactor.

It catalyses the reaction [protein-PII]-L-tyrosine + UTP = [protein-PII]-uridylyl-L-tyrosine + diphosphate. The catalysed reaction is [protein-PII]-uridylyl-L-tyrosine + H2O = [protein-PII]-L-tyrosine + UMP + H(+). With respect to regulation, uridylyltransferase (UTase) activity is inhibited by glutamine, while glutamine activates uridylyl-removing (UR) activity. Its function is as follows. Modifies, by uridylylation and deuridylylation, the PII regulatory proteins (GlnB and homologs), in response to the nitrogen status of the cell that GlnD senses through the glutamine level. Under low glutamine levels, catalyzes the conversion of the PII proteins and UTP to PII-UMP and PPi, while under higher glutamine levels, GlnD hydrolyzes PII-UMP to PII and UMP (deuridylylation). Thus, controls uridylylation state and activity of the PII proteins, and plays an important role in the regulation of nitrogen fixation and metabolism. This Mesorhizobium japonicum (strain LMG 29417 / CECT 9101 / MAFF 303099) (Mesorhizobium loti (strain MAFF 303099)) protein is Bifunctional uridylyltransferase/uridylyl-removing enzyme.